Here is a 382-residue protein sequence, read N- to C-terminus: MNLKEKTRALFAEIFGYPATHTIQAPGRVNLIGEHTDYNDGFVLPCAIDYQTVISCAPRDDRTVRVIAADYDNQLDEFSLDAPIVTHDSQQWSNYVRGVVKHLQQRNNAFGGVDMVISGNVPQGAGLSSSASLEVAVGTVFQQLYHLPLDGAQIALNGQEAENQFVGCNCGIMDQLISALGKKDHALLIDCRTLGAKAVSMPKGVAVVIINSNFKRTLVGSEYNTRREQCETGARFFQQPALRDVSLEAFNAVASELDPVVAKRVRHVLSENARTVEAASALEKGDLQRMGQLMAESHASMRDDFEITVPQIDTLVDIVKATIGDQGGVRMTGGGFGGCVVALIPEDLVPAVQQAVAQQYEAKTGIKETFYVCKPSQGAGQC.

34 to 37 (EHTD) is a binding site for substrate. 124–130 (GAGLSSS) is a binding site for ATP. Residues S130 and E162 each coordinate Mg(2+). Residue D174 is the Proton acceptor of the active site. Y223 lines the substrate pocket.

Belongs to the GHMP kinase family. GalK subfamily.

The protein localises to the cytoplasm. It catalyses the reaction alpha-D-galactose + ATP = alpha-D-galactose 1-phosphate + ADP + H(+). Its pathway is carbohydrate metabolism; galactose metabolism. In terms of biological role, catalyzes the transfer of the gamma-phosphate of ATP to D-galactose to form alpha-D-galactose-1-phosphate (Gal-1-P). This chain is Galactokinase, found in Salmonella agona (strain SL483).